The chain runs to 411 residues: Imidazolonepropionase (411 aa).

Positions 75 and 77 each coordinate Fe(3+). Residues histidine 75 and histidine 77 each contribute to the Zn(2+) site. 3 residues coordinate 4-imidazolone-5-propanoate: arginine 84, tyrosine 147, and histidine 180. N-formimidoyl-L-glutamate is bound at residue tyrosine 147. Residue histidine 245 coordinates Fe(3+). Histidine 245 is a Zn(2+) binding site. Glutamine 248 is a 4-imidazolone-5-propanoate binding site. Aspartate 320 provides a ligand contact to Fe(3+). A Zn(2+)-binding site is contributed by aspartate 320. N-formimidoyl-L-glutamate-binding residues include asparagine 322 and glycine 324. Threonine 325 contacts 4-imidazolone-5-propanoate.

Belongs to the metallo-dependent hydrolases superfamily. HutI family. The cofactor is Zn(2+). Fe(3+) serves as cofactor.

Its subcellular location is the cytoplasm. The enzyme catalyses 4-imidazolone-5-propanoate + H2O = N-formimidoyl-L-glutamate. It participates in amino-acid degradation; L-histidine degradation into L-glutamate; N-formimidoyl-L-glutamate from L-histidine: step 3/3. Functionally, catalyzes the hydrolytic cleavage of the carbon-nitrogen bond in imidazolone-5-propanoate to yield N-formimidoyl-L-glutamate. It is the third step in the universal histidine degradation pathway. This is Imidazolonepropionase from Photobacterium profundum (strain SS9).